The following is a 77-amino-acid chain: uncharacterized protein (77 aa).

The next 2 helical transmembrane spans lie at 3-23 and 35-55; these read FNFIEFLGYMATFFVAASFLF and IGAILFVIYSLIITAYPVALL.

It localises to the cell membrane. This is an uncharacterized protein from Haemophilus influenzae (strain ATCC 51907 / DSM 11121 / KW20 / Rd).